The following is a 115-amino-acid chain: Large ribosomal subunit protein bL19 (115 aa).

It belongs to the bacterial ribosomal protein bL19 family.

This protein is located at the 30S-50S ribosomal subunit interface and may play a role in the structure and function of the aminoacyl-tRNA binding site. The chain is Large ribosomal subunit protein bL19 from Pectobacterium atrosepticum (strain SCRI 1043 / ATCC BAA-672) (Erwinia carotovora subsp. atroseptica).